A 251-amino-acid chain; its full sequence is UDP-N-acetylglucosamine--dolichyl-phosphate N-acetylglucosaminyltransferase (251 aa).

The chain crosses the membrane as a helical span at residues 150–167 (VGNLGLSFITFLLGGYYV).

This sequence belongs to the glycosyltransferase 2 family.

It is found in the cell membrane. The catalysed reaction is a di-trans,poly-cis-dolichyl phosphate + UDP-N-acetyl-alpha-D-glucosamine = an N-acetyl-alpha-D-glucosaminyl-phospho-di-trans,poly-cis-dolichol + UDP. The protein operates within cell surface structure biogenesis; S-layer biogenesis. It functions in the pathway protein modification; protein glycosylation. Functionally, involved in the assembly of an N-linked disaccharide that decorates the S-layer glycoprotein and flagellins. AglK initiates N-linked glycosylation through the formation of alpha-linked dolichyl monophosphate N-acetylglucosamine. It catalyzes the transfer of GlcNAc from the donor substrate UDP-GlcNAc to dolichyl phosphate C55 (Dol-P) to yield Dol-P-GlcNAc. AglK reaction proceeds with retention of stereochemistry. The reaction is specific for UDP-GlcNAc. AglK shows a stronger preference for short dolichol (C55-60 Dol-P) substrates compared with the longer (C85-105 Dol-P). The protein is UDP-N-acetylglucosamine--dolichyl-phosphate N-acetylglucosaminyltransferase of Methanococcus voltae.